Here is a 137-residue protein sequence, read N- to C-terminus: Putative pre-16S rRNA nuclease (137 aa).

Belongs to the YqgF nuclease family.

Its subcellular location is the cytoplasm. Functionally, could be a nuclease involved in processing of the 5'-end of pre-16S rRNA. The sequence is that of Putative pre-16S rRNA nuclease from Oceanobacillus iheyensis (strain DSM 14371 / CIP 107618 / JCM 11309 / KCTC 3954 / HTE831).